The sequence spans 576 residues: Small ribosomal subunit protein mS80 (rPPR6) (576 aa).

A mitochondrion-targeting transit peptide spans 1–76 (MLRSFLCRSQ…SLPADEIPIS (76 aa)). 9 PPR repeats span residues 230–264 (NLEI…GFTP), 265–299 (NAKT…GVLS), 300–336 (EGEQ…SLPP), 341–370 (TLIT…ARRR), 371–405 (GIKP…GPAP), 406–440 (GNAV…GLKP), 441–475 (DVYT…HKKL), 476–510 (SPVT…GVQP), and 511–546 (NADE…GLHL).

The protein belongs to the PPR family. P subfamily. In terms of assembly, component of the mitochondrial ribosome small subunit.

The protein resides in the mitochondrion. This chain is Small ribosomal subunit protein mS80 (rPPR6), found in Arabidopsis thaliana (Mouse-ear cress).